The following is a 376-amino-acid chain: Formate dehydrogenase 2 (376 aa).

Residues V97 and N121 each contribute to the substrate site. Residues 176–177 (RI), D197, 244–248 (PLHKD), T270, D296, and 325–328 (HISG) each bind NAD(+).

Belongs to the D-isomer specific 2-hydroxyacid dehydrogenase family. FDH subfamily. As to quaternary structure, homodimer.

The protein resides in the cytoplasm. The catalysed reaction is formate + NAD(+) = CO2 + NADH. Functionally, catalyzes the NAD(+)-dependent oxidation of formate to carbon dioxide. Formate oxidation is the final step in the methanol oxidation pathway in methylotrophic microorganisms. Has a role in the detoxification of exogenous formate in non-methylotrophic organisms. This chain is Formate dehydrogenase 2 (FDH2), found in Saccharomyces cerevisiae (strain CEN.PK113-7D) (Baker's yeast).